The chain runs to 698 residues: G1/S-specific cyclin CCN1 (698 aa).

Positions 1-11 (MTSLQQQQQQQ) are enriched in low complexity. Disordered stretches follow at residues 1–21 (MTSL…PHHI), 277–326 (QKKQ…DDED), 469–577 (DEDE…GSIL), 599–619 (SNSS…EKRY), and 659–698 (NNTN…QYHQ). The span at 277 to 302 (QKKQKKAFSSNSSRTTTASYTHQNQS) shows a compositional bias: polar residues. Composition is skewed to acidic residues over residues 310–326 (DEDI…DDED) and 469–480 (DEDENVSTDDEA). Composition is skewed to polar residues over residues 493–520 (DGNN…NHPQ) and 528–567 (PSAT…SSFA). The span at 659–669 (NNTNSSSPLMN) shows a compositional bias: polar residues. Positions 670-690 (QQQQYYHQQQHQQQVTQSSLY) are enriched in low complexity.

This sequence belongs to the cyclin family.

Essential for the control of the cell cycle at the G1/S (start) transition. Interacts with the CDC2 protein kinase to form MPF. In Candida albicans (strain WO-1) (Yeast), this protein is G1/S-specific cyclin CCN1 (CCN1).